The chain runs to 321 residues: uncharacterized protein (321 aa).

This is an uncharacterized protein from Archaeoglobus fulgidus (strain ATCC 49558 / DSM 4304 / JCM 9628 / NBRC 100126 / VC-16).